The following is a 353-amino-acid chain: Peptide chain release factor 1 (353 aa).

Glutamine 230 carries the N5-methylglutamine modification.

This sequence belongs to the prokaryotic/mitochondrial release factor family. Methylated by PrmC. Methylation increases the termination efficiency of RF1.

It localises to the cytoplasm. In terms of biological role, peptide chain release factor 1 directs the termination of translation in response to the peptide chain termination codons UAG and UAA. This chain is Peptide chain release factor 1, found in Leptospira biflexa serovar Patoc (strain Patoc 1 / ATCC 23582 / Paris).